Reading from the N-terminus, the 159-residue chain is Thymic stromal lymphopoietin (159 aa).

An N-terminal signal peptide occupies residues 1–28 (MFPFALLYVLSVSFRKIFILQLVGLVLT). 3 disulfide bridges follow: C34-C110, C69-C75, and C90-C137. N-linked (GlcNAc...) asparagine glycosylation occurs at N64. An N-linked (GlcNAc...) asparagine glycan is attached at N119.

Interacts with a receptor composed of CRLF2 and IL7R. Binding of TSLP to CRLF2/TSLPR is a mechanistic prerequisite for recruitment of IL7R to the high-affinity ternary complex. As to expression, isoform 1 is expressed in a number of tissues including heart, liver and prostate. Isoform 2 is the predominant form in keratinocytes of oral mucosa, skin and in salivary glands. It is secreted into saliva.

Its subcellular location is the secreted. Cytokine that induces the release of T-cell-attracting chemokines from monocytes and, in particular, enhances the maturation of CD11c(+) dendritic cells. Can induce allergic inflammation by directly activating mast cells. Functionally, may act as an antimicrobial peptide in the oral cavity and on the skin. The protein is Thymic stromal lymphopoietin (TSLP) of Homo sapiens (Human).